The chain runs to 200 residues: ASI1-immunoprecipitated protein 1 (200 aa).

One can recognise an RRM domain in the interval 18–101; sequence RTVYVDELTP…RPVRACAAEP (84 aa).

Component of the ASI1-AIPP1-EDM2 (AAE) RNA regulatory complex composed of at least AIPP1/EDM3, ASI1 and EDM2 and may contain CPL2, AIPP2 and AIPP3/BDT1. Binds directly to ASI1 and EDM2 and may function as a bridge protein between them. Co-associates with EDM2 to histone H3 lysine 9 dimethylation (H3K9me2)-marked chromatin and transcripts at a critical proximal polyadenylation site of RPP7 to hamper proximal transcript polyadeylation/termination.

The protein localises to the nucleus. Prevents gene silencing by suppressing CHG methylation as well as histone H3 lysine 9 dimethylation (H3K9me2) status at target loci. Collaboratively with ASI1 and EDM2, the AAE complex regulates alternative RNA processing (e.g. alternative splicing) and epigenetic silencing (e.g. H3K9me2) of intronic heterochromatin-containing genes as well as genic heterochromatin-containing genes by promoting distal 3' polyadenylation, thus being required for the accumulation of their full-length transcripts. May also modulate transposable elements (TE) expression. Mediates RPP7-dependent race-specific disease resistance by promoting histone H3 lysine 9 dimethylation (H3K9me2) at the proximal RPP7 polyadenylation site, thus controlling alternative polyadenylation of RPP7 immune receptor transcripts and facilitating 2-phosphoserine RNAPII occupancy. In cv. Columbia, required for RPP7-dependent disease resistance against the Hyaloperonospora arabidopsidis isolate Hiks1. The sequence is that of ASI1-immunoprecipitated protein 1 from Arabidopsis thaliana (Mouse-ear cress).